The chain runs to 262 residues: Phycoerythrobilin:ferredoxin oxidoreductase (262 aa).

It belongs to the HY2 family.

It catalyses the reaction (3Z)-phycoerythrobilin + oxidized 2[4Fe-4S]-[ferredoxin] = 15,16-dihydrobiliverdin + reduced 2[4Fe-4S]-[ferredoxin] + 2 H(+). In terms of biological role, catalyzes the two-electron reduction of the C2 and C3(1) diene system of 15,16-dihydrobiliverdin. The protein is Phycoerythrobilin:ferredoxin oxidoreductase of Synechococcus sp. (strain RCC307).